The sequence spans 70 residues: NADH dehydrogenase [ubiquinone] 1 alpha subcomplex subunit 1 (70 aa).

The chain crosses the membrane as a helical span at residues 1–21 (MWFEILPGLAIMGVCLVIPGV).

Belongs to the complex I NDUFA1 subunit family. Complex I is composed of 45 different subunits.

Its subcellular location is the mitochondrion inner membrane. Its function is as follows. Accessory subunit of the mitochondrial membrane respiratory chain NADH dehydrogenase (Complex I), that is believed not to be involved in catalysis. Complex I functions in the transfer of electrons from NADH to the respiratory chain. The immediate electron acceptor for the enzyme is believed to be ubiquinone. The sequence is that of NADH dehydrogenase [ubiquinone] 1 alpha subcomplex subunit 1 (Ndufa1) from Mus musculus (Mouse).